Reading from the N-terminus, the 98-residue chain is NADH-ubiquinone oxidoreductase chain 4L (98 aa).

Helical transmembrane passes span 1 to 21 (MLAINLNLTVAFMLALTGVLV), 25 to 45 (HLMSTLLCLEGMMLSLFILMT), and 57 to 79 (SMAPLILLVFSACEAGVGLALLV).

This sequence belongs to the complex I subunit 4L family. As to quaternary structure, core subunit of respiratory chain NADH dehydrogenase (Complex I) which is composed of 45 different subunits.

Its subcellular location is the mitochondrion inner membrane. The enzyme catalyses a ubiquinone + NADH + 5 H(+)(in) = a ubiquinol + NAD(+) + 4 H(+)(out). Functionally, core subunit of the mitochondrial membrane respiratory chain NADH dehydrogenase (Complex I) which catalyzes electron transfer from NADH through the respiratory chain, using ubiquinone as an electron acceptor. Part of the enzyme membrane arm which is embedded in the lipid bilayer and involved in proton translocation. This is NADH-ubiquinone oxidoreductase chain 4L (MT-ND4L) from Dasyurus hallucatus (Northern quoll).